The chain runs to 317 residues: Testis-expressed protein 19.2 (317 aa).

Positions 64–75 (MELSEASSEPEE) are enriched in acidic residues. Residues 64–113 (MELSEASSEPEEWPGLSGGEGQGHLPHGISVSAGSGAQGPQPVPTELGPQ) are disordered. The segment at 101–145 (QGPQPVPTELGPQEAVPLDLGPEDAEWTQALPWRFDGLSPCSHWL) is important for interaction with piRNA.

In terms of assembly, interacts with UBR2. Interacts with piRNA-associated proteins DDX4, EDC4, MAEL, PIWIL1, PIWIL2, RANBP9 and TDRD6. In terms of tissue distribution, specifically expressed in somatic cells of male gonad lineage.

The protein localises to the cytoplasm. Functionally, may be required during spermatogenesis, probably by participating in the repression of retrotransposable elements and prevent their mobilization. With its paralog, Tex19.1, collaborates with the Piwi-interacting RNA (piRNA) pathway, which mediates the repression of transposable elements during meiosis by forming complexes composed of piRNAs and Piwi proteins. Interacts with Piwi proteins and directly binds piRNAs, a class of 24 to 30 nucleotide RNAs that are generated by a Dicer-independent mechanism and are primarily derived from transposons and other repeated sequence elements. The protein is Testis-expressed protein 19.2 (Tex19.2) of Mus musculus (Mouse).